Consider the following 348-residue polypeptide: Galactose-1-phosphate uridylyltransferase (348 aa).

A UDP-alpha-D-glucose-binding site is contributed by 28 to 31; sequence RAKR. The Zn(2+) site is built by Cys-52 and Cys-55. Residues Val-61 and 77–78 each bind UDP-alpha-D-glucose; that span reads ND. A Zn(2+)-binding site is contributed by His-115. UDP-alpha-D-glucose-binding positions include Asn-153 and 159–161; that span reads GCS. His-164 is a binding site for Zn(2+). His-166 functions as the Tele-UMP-histidine intermediate in the catalytic mechanism. Gln-168 is a UDP-alpha-D-glucose binding site. Fe cation is bound by residues Glu-182, His-281, His-296, and His-298. UDP-alpha-D-glucose is bound by residues 311–312, 316–317, and Gln-323; these read KF and YE.

This sequence belongs to the galactose-1-phosphate uridylyltransferase type 1 family. Requires Zn(2+) as cofactor.

The enzyme catalyses alpha-D-galactose 1-phosphate + UDP-alpha-D-glucose = alpha-D-glucose 1-phosphate + UDP-alpha-D-galactose. Its pathway is carbohydrate metabolism; galactose metabolism. The protein is Galactose-1-phosphate uridylyltransferase (galT) of Salmonella typhimurium (strain LT2 / SGSC1412 / ATCC 700720).